A 434-amino-acid polypeptide reads, in one-letter code: UDP-N-acetylmuramoylalanine--D-glutamate ligase (434 aa).

117–123 (GTNGKST) provides a ligand contact to ATP.

It belongs to the MurCDEF family.

The protein resides in the cytoplasm. The catalysed reaction is UDP-N-acetyl-alpha-D-muramoyl-L-alanine + D-glutamate + ATP = UDP-N-acetyl-alpha-D-muramoyl-L-alanyl-D-glutamate + ADP + phosphate + H(+). The protein operates within cell wall biogenesis; peptidoglycan biosynthesis. Its function is as follows. Cell wall formation. Catalyzes the addition of glutamate to the nucleotide precursor UDP-N-acetylmuramoyl-L-alanine (UMA). The protein is UDP-N-acetylmuramoylalanine--D-glutamate ligase of Sphingopyxis alaskensis (strain DSM 13593 / LMG 18877 / RB2256) (Sphingomonas alaskensis).